The following is a 263-amino-acid chain: Putative ankyrin repeat domain-containing protein 20A12 pseudogene (263 aa).

Coiled coils occupy residues 65-121 (KKDL…MLES) and 171-263 (NQVF…IQLH).

This Homo sapiens (Human) protein is Putative ankyrin repeat domain-containing protein 20A12 pseudogene.